The following is a 355-amino-acid chain: D-alanine--D-alanine ligase (355 aa).

The 208-residue stretch at 143 to 350 folds into the ATP-grasp domain; it reads KIIFSNLKIP…IEQLVAKLVD (208 aa). An ATP-binding site is contributed by 178-233; it reads LKKLNFPVFVKPSNSGSSLGISKVINKSEIIPALEKARGIDPSILIEEGLEVREIE. Residues D303, E317, and N319 each coordinate Mg(2+).

Belongs to the D-alanine--D-alanine ligase family. The cofactor is Mg(2+). It depends on Mn(2+) as a cofactor.

The protein resides in the cytoplasm. It carries out the reaction 2 D-alanine + ATP = D-alanyl-D-alanine + ADP + phosphate + H(+). Its pathway is cell wall biogenesis; peptidoglycan biosynthesis. Its function is as follows. Cell wall formation. This Prochlorococcus marinus (strain AS9601) protein is D-alanine--D-alanine ligase.